A 344-amino-acid polypeptide reads, in one-letter code: C-C chemokine receptor-like 2 (344 aa).

Residues 1 to 43 (MANYTLAPEDEYDVLIEGELESDEAEQCDRYDTWALSAQLVPS) are Extracellular-facing. N-linked (GlcNAc...) asparagine glycosylation is present at asparagine 3. A helical membrane pass occupies residues 44 to 64 (LCSAVFVVGVLDNLLVVLILV). Residues 65-74 (KYKGLKRVEN) are Cytoplasmic-facing. Residues 75 to 95 (IYLLNLAVSNLCFLLTLPFWA) form a helical membrane-spanning segment. The Extracellular segment spans residues 96-104 (HAGGDPMCK). Cysteine 103 and cysteine 181 form a disulfide bridge. The helical transmembrane segment at 105 to 125 (ILIGLYFVGLYSETFFNCLLT) threads the bilayer. Over 126 to 148 (LQRYLVFLHKGNFFSVRRRVPCG) the chain is Cytoplasmic. Residues 149–169 (IVTSAVAWVTAILATVPEFAV) traverse the membrane as a helical segment. Topologically, residues 170 to 198 (YKPQMEDPKYKCAFSRTPFLPADETFWKH) are extracellular. Residues 199–219 (FLTLKMNVSVLVFPLFIFTFL) form a helical membrane-spanning segment. Over 220–238 (YVQMRKTLRFGEQRYSLFK) the chain is Cytoplasmic. A helical transmembrane segment spans residues 239-259 (LVFAIMVVFLLMWAPYNIALF). The Extracellular portion of the chain corresponds to 260 to 281 (LSTFKEHFSLSDCKSNYNLDKS). Residues 282–302 (VLITKLIATTHCCVNPLLYVF) traverse the membrane as a helical segment. Residues 303-344 (LDGTFRKYLCRFFHRRSNTPRQPRRRFAQGTSREEPDRSTEV) lie on the Cytoplasmic side of the membrane. Residues 323–344 (RQPRRRFAQGTSREEPDRSTEV) form a disordered region. Over residues 334-344 (SREEPDRSTEV) the composition is skewed to basic and acidic residues.

The protein belongs to the G-protein coupled receptor 1 family.

It is found in the cell membrane. Receptor for CCL19 and chemerin/RARRES2. Does not appear to be a signaling receptor, but may have a role in modulating chemokine-triggered immune responses by capturing and internalizing CCL19 or by presenting RARRES2 ligand to CMKLR1, a functional signaling receptor. Plays a critical role for the development of Th2 responses. This Macaca mulatta (Rhesus macaque) protein is C-C chemokine receptor-like 2 (CCRL2).